A 341-amino-acid chain; its full sequence is Oxidoreductase swnN (341 aa).

The protein belongs to the NmrA-type oxidoreductase family. Isoflavone reductase subfamily.

The protein operates within mycotoxin biosynthesis. Its function is as follows. Oxidoreductase; part of the gene cluster that mediates the biosynthesis of swainsonine (SW), a cytotoxic fungal alkaloid and a potential cancer therapy drug. Swainsonine production occurs via a multibranched pathway and is dispensable for fungal colonization of plants and infection of insect hosts. The first step of swainsonine biosynthesis is the production of the precursor pipecolic acid (PA) via conversion of L-lysine (Lys) to 1-piperideine-6-carboxylate (P6C) by the aminotransferase swnA, the latter being further reduced to PA by the reductase swnR. PA can be converted from lysine by both the SW biosynthetic cluster and the unclustered genes such as lysine cyclodeaminase. The PKS-NRPS hybrid synthetase swnK uptakes and condensates PA and malonyl-CoA with and without skipping of the ketoreductase (KR) domain in order to produce 3 intermediates, 1-oxoindolizidine, (1S)-1-hydroxyindolizin, and (1R)-1-hydroxyindolizine; with the transisomer (1S)-1-hydroxyindolizin being predominant. The terminal thioester reductase (TE) domain of swnK is involved in reduction of the thioester bond to release the intermediate aldehydes. The oxidoreductase swnN could contribute to the reduction of 1-oxoindolizidine to (1S)-1-hydroxyindolizin and (1R)-1-hydroxyindolizine, contributing to the major route of SW production. The dioxygenase swnH2 would be responsible for the oxidization of (1R)-1-hydroxyindolizine into (1R,2S)-1,2-dihydroxyindolizine and of (1S)-1-hydroxyindolizin to yield both (1R,2S)-1,2-dihydroxyindolizine and (1S,2S)-1,2-dihydroxyindolizine. The dioxygenase swnH1 then performs the conversion of the 1,2-dihydroxyindolizine epimers to SW. The chain is Oxidoreductase swnN from Metarhizium robertsii (strain ARSEF 23 / ATCC MYA-3075) (Metarhizium anisopliae (strain ARSEF 23)).